A 1585-amino-acid chain; its full sequence is uncharacterized protein (1585 aa).

Residues 12-59 (DKISRKLRMIQGNAERLKRAANGPLIFEAEDRTERVMRQIDRSANRLT) adopt a coiled-coil conformation. Disordered regions lie at residues 586–627 (PKRT…SLPR) and 645–692 (IRRR…NPTR). A compositionally biased stretch (polar residues) spans 618 to 627 (TATGPTSLPR). The segment covering 645–655 (IRRRRGKRVLG) has biased composition (basic residues). A compositionally biased stretch (polar residues) spans 661–672 (NRMNPSDSSIAV). Serine 970 and serine 972 each carry phosphoserine.

To B.subtilis XkdO.

This is an uncharacterized protein from Bacillus subtilis (strain 168).